A 710-amino-acid chain; its full sequence is Cyclomaltodextrin glucanotransferase (710 aa).

A signal peptide spans 1–27 (MKKTFKLILVLMLSLTLVFGLTAPIQA). Residues aspartate 54, asparagine 56, asparagine 59, asparagine 60, glycine 78, and aspartate 80 each coordinate Ca(2+). 128-129 (YW) provides a ligand contact to substrate. Asparagine 167 is a Ca(2+) binding site. Position 168 (histidine 168) interacts with substrate. Isoleucine 218 contacts Ca(2+). Substrate is bound at residue 221–224 (NLFD). Ca(2+) is bound at residue aspartate 227. A substrate-binding site is contributed by arginine 255. The Nucleophile role is filled by aspartate 257. 260–261 (KH) contacts substrate. Residue histidine 261 participates in Ca(2+) binding. Glutamate 285 (proton donor) is an active-site residue. Substrate contacts are provided by histidine 355, aspartate 398, and arginine 402. The IPT/TIG domain maps to 526-603 (PLIGHVGPTM…GATSNTYNNI (78 aa)). The CBM20 domain maps to 605-710 (ILTGNQICVR…TGTVIVNWQQ (106 aa)).

It belongs to the glycosyl hydrolase 13 family. Ca(2+) serves as cofactor.

It localises to the secreted. It carries out the reaction Cyclizes part of a (1-&gt;4)-alpha-D-glucan chain by formation of a (1-&gt;4)-alpha-D-glucosidic bond.. Its function is as follows. Degrades starch to alpha-, beta-, and gamma-cyclodextrins, as well as linear sugars. In Thermoanaerobacterium thermosulfurigenes (Clostridium thermosulfurogenes), this protein is Cyclomaltodextrin glucanotransferase (amyA).